Here is a 358-residue protein sequence, read N- to C-terminus: C-C chemokine receptor type 3 (358 aa).

At 1–43 (MATYPEEAELETEFPGTTFYDYEFAQPCFKVSITDLGAQFLPS) the chain is on the extracellular side. The chain crosses the membrane as a helical span at residues 44 to 64 (LFSLVFIVGLLGNITVIVVLT). Residues 65–74 (KYQKLKIMTN) are Cytoplasmic-facing. A helical transmembrane segment spans residues 75–95 (IYLLNLAISDLLFLFTLPFWT). Over 96–112 (YYVHWNKWVFGHFMCKI) the chain is Extracellular. Residues 113–133 (ISGLYYVGLFSEIFFIILLTI) form a helical membrane-spanning segment. Residues 134–154 (DRYLAIVHAVFALRTRTVTFG) lie on the Cytoplasmic side of the membrane. The chain crosses the membrane as a helical span at residues 155 to 175 (IITSVITWVLAVLAALPEFMF). The Extracellular portion of the chain corresponds to 176–206 (YGTQGHFEVLFCGPSYPEKKEHHWKRFQALR). A helical transmembrane segment spans residues 207 to 227 (MNIFGLALPLLIMIICYTGII). At 228 to 243 (KTLLRCPSKKKYKAIR) the chain is on the cytoplasmic side. The chain crosses the membrane as a helical span at residues 244 to 264 (LIFVIMVVFFVFWTPYNLLLL). Topologically, residues 265–287 (FSAFDLSFLDDCERSKQLDMAKH) are extracellular. Residues 288–308 (VTEVIAHTHCCINPIIYAFVG) traverse the membrane as a helical segment. The Cytoplasmic segment spans residues 309 to 358 (ERFQKYLRHFLHRNVTMHLSKYIPFFTSEKLERSSSISPSSGDPELSVVF).

The protein belongs to the G-protein coupled receptor 1 family.

It localises to the cell membrane. In terms of biological role, receptor for C-C type chemokine. Binds and responds to a variety of chemokines, including CCL11, CCL26, CCL7, CCL13, RANTES(CCL5) and CCL15. Subsequently transduces a signal by increasing the intracellular calcium ions level. In addition acts as a possible functional receptor for NARS1. The protein is C-C chemokine receptor type 3 (CCR3) of Cavia porcellus (Guinea pig).